We begin with the raw amino-acid sequence, 173 residues long: Crossover junction endodeoxyribonuclease RuvC (173 aa).

Catalysis depends on residues aspartate 8, glutamate 67, and aspartate 139. Positions 8, 67, and 139 each coordinate Mg(2+).

The protein belongs to the RuvC family. Homodimer which binds Holliday junction (HJ) DNA. The HJ becomes 2-fold symmetrical on binding to RuvC with unstacked arms; it has a different conformation from HJ DNA in complex with RuvA. In the full resolvosome a probable DNA-RuvA(4)-RuvB(12)-RuvC(2) complex forms which resolves the HJ. The cofactor is Mg(2+).

The protein resides in the cytoplasm. The enzyme catalyses Endonucleolytic cleavage at a junction such as a reciprocal single-stranded crossover between two homologous DNA duplexes (Holliday junction).. In terms of biological role, the RuvA-RuvB-RuvC complex processes Holliday junction (HJ) DNA during genetic recombination and DNA repair. Endonuclease that resolves HJ intermediates. Cleaves cruciform DNA by making single-stranded nicks across the HJ at symmetrical positions within the homologous arms, yielding a 5'-phosphate and a 3'-hydroxyl group; requires a central core of homology in the junction. The consensus cleavage sequence is 5'-(A/T)TT(C/G)-3'. Cleavage occurs on the 3'-side of the TT dinucleotide at the point of strand exchange. HJ branch migration catalyzed by RuvA-RuvB allows RuvC to scan DNA until it finds its consensus sequence, where it cleaves and resolves the cruciform DNA. This Pseudoalteromonas atlantica (strain T6c / ATCC BAA-1087) protein is Crossover junction endodeoxyribonuclease RuvC.